The primary structure comprises 283 residues: tRNA (guanine-N(1)-)-methyltransferase (283 aa).

Residues G113 and 133 to 138 contribute to the S-adenosyl-L-methionine site; that span reads IGDYVL.

Belongs to the RNA methyltransferase TrmD family. As to quaternary structure, homodimer.

It is found in the cytoplasm. The catalysed reaction is guanosine(37) in tRNA + S-adenosyl-L-methionine = N(1)-methylguanosine(37) in tRNA + S-adenosyl-L-homocysteine + H(+). Specifically methylates guanosine-37 in various tRNAs. The chain is tRNA (guanine-N(1)-)-methyltransferase from Parafrankia sp. (strain EAN1pec).